The sequence spans 171 residues: Nudix hydrolase DR_0079 (171 aa).

The Nudix hydrolase domain maps to 32 to 162 (ERVRVVNAFL…EAAKGDLAEL (131 aa)). A Nudix box motif is present at residues 69 to 91 (GGAVQSGETYEEAFRREAREELN). The Mg(2+) site is built by E85 and E89.

Belongs to the Nudix hydrolase family. As to quaternary structure, monomer. The cofactor is Mg(2+).

Its activity is regulated as follows. Inhibited by zinc, calcium or copper ions. In terms of biological role, hydrolase that converts various nucleotide triphosphates (NTPs) to the corresponding nucleotide monophosphates and diphosphate, and nucleotide diphosphates to nucleotide monophosphates and inorganic phosphate. Has a marked preference for cytosine ribonucleoside 5'-diphosphate (CDP) and cytosine ribonucleoside 5'-triphosphate (CTP). Has lower activity towards the deoxyribose nucleotides dCDP and dCTP, and towards dGDP, TDP and UDP. The protein is Nudix hydrolase DR_0079 of Deinococcus radiodurans (strain ATCC 13939 / DSM 20539 / JCM 16871 / CCUG 27074 / LMG 4051 / NBRC 15346 / NCIMB 9279 / VKM B-1422 / R1).